The following is a 153-amino-acid chain: UPF0251 protein Daud_0090 (153 aa).

The span at 129 to 138 shows a compositional bias: basic and acidic residues; that stretch reads ELMTRPERCS. The interval 129-153 is disordered; the sequence is ELMTRPERCSRPKRGAGKYRVPKKR. Over residues 139–153 the composition is skewed to basic residues; that stretch reads RPKRGAGKYRVPKKR.

The protein belongs to the UPF0251 family.

The sequence is that of UPF0251 protein Daud_0090 from Desulforudis audaxviator (strain MP104C).